The primary structure comprises 726 residues: Catalase-peroxidase (726 aa).

Positions 1-34 (MSMSDDTHNSLSTGKCPFHQGSHDRSAGAGTSSH) are disordered. The tryptophyl-tyrosyl-methioninium (Trp-Tyr) (with M-252) cross-link spans 105-226 (WHGAGTYRSV…LGATEMGLIY (122 aa)). The active-site Proton acceptor is H106. The segment at residues 226–252 (YVNPEGPDHSGEPLSAAAAIRATFGNM) is a cross-link (tryptophyl-tyrosyl-methioninium (Tyr-Met) (with W-105)). Residue H267 coordinates heme b.

Belongs to the peroxidase family. Peroxidase/catalase subfamily. In terms of assembly, homodimer or homotetramer. The cofactor is heme b. Formation of the three residue Trp-Tyr-Met cross-link is important for the catalase, but not the peroxidase activity of the enzyme.

It carries out the reaction H2O2 + AH2 = A + 2 H2O. The enzyme catalyses 2 H2O2 = O2 + 2 H2O. In terms of biological role, bifunctional enzyme with both catalase and broad-spectrum peroxidase activity. The polypeptide is Catalase-peroxidase (Citrobacter koseri (strain ATCC BAA-895 / CDC 4225-83 / SGSC4696)).